The sequence spans 212 residues: Thiamine-phosphate synthase (212 aa).

4-amino-2-methyl-5-(diphosphooxymethyl)pyrimidine-binding positions include 40–44 and N75; that span reads QFREK. Positions 76 and 95 each coordinate Mg(2+). S113 contacts 4-amino-2-methyl-5-(diphosphooxymethyl)pyrimidine. A 2-[(2R,5Z)-2-carboxy-4-methylthiazol-5(2H)-ylidene]ethyl phosphate-binding site is contributed by 139–141; the sequence is TSS. K142 contributes to the 4-amino-2-methyl-5-(diphosphooxymethyl)pyrimidine binding site. 2-[(2R,5Z)-2-carboxy-4-methylthiazol-5(2H)-ylidene]ethyl phosphate contacts are provided by residues G171 and 191–192; that span reads IS.

It belongs to the thiamine-phosphate synthase family. The cofactor is Mg(2+).

The enzyme catalyses 2-[(2R,5Z)-2-carboxy-4-methylthiazol-5(2H)-ylidene]ethyl phosphate + 4-amino-2-methyl-5-(diphosphooxymethyl)pyrimidine + 2 H(+) = thiamine phosphate + CO2 + diphosphate. It carries out the reaction 2-(2-carboxy-4-methylthiazol-5-yl)ethyl phosphate + 4-amino-2-methyl-5-(diphosphooxymethyl)pyrimidine + 2 H(+) = thiamine phosphate + CO2 + diphosphate. The catalysed reaction is 4-methyl-5-(2-phosphooxyethyl)-thiazole + 4-amino-2-methyl-5-(diphosphooxymethyl)pyrimidine + H(+) = thiamine phosphate + diphosphate. The protein operates within cofactor biosynthesis; thiamine diphosphate biosynthesis; thiamine phosphate from 4-amino-2-methyl-5-diphosphomethylpyrimidine and 4-methyl-5-(2-phosphoethyl)-thiazole: step 1/1. Condenses 4-methyl-5-(beta-hydroxyethyl)thiazole monophosphate (THZ-P) and 2-methyl-4-amino-5-hydroxymethyl pyrimidine pyrophosphate (HMP-PP) to form thiamine monophosphate (TMP). This Staphylococcus epidermidis (strain ATCC 35984 / DSM 28319 / BCRC 17069 / CCUG 31568 / BM 3577 / RP62A) protein is Thiamine-phosphate synthase.